An 878-amino-acid polypeptide reads, in one-letter code: Phosphoenolpyruvate carboxylase (878 aa).

Catalysis depends on residues H140 and K545.

It belongs to the PEPCase type 1 family. The cofactor is Mg(2+).

It carries out the reaction oxaloacetate + phosphate = phosphoenolpyruvate + hydrogencarbonate. In terms of biological role, forms oxaloacetate, a four-carbon dicarboxylic acid source for the tricarboxylic acid cycle. In Pseudomonas syringae pv. syringae (strain B728a), this protein is Phosphoenolpyruvate carboxylase.